The chain runs to 1020 residues: Sodium/potassium-transporting ATPase subunit alpha-2 (1020 aa).

The propeptide occupies Met-1–Ala-5. The interval Met-1–Asp-31 is disordered. Topologically, residues Gly-6–Pro-85 are cytoplasmic. A Phosphoserine modification is found at Ser-10. Residues Pro-80–Pro-82 are interaction with phosphoinositide-3 kinase. Residues Glu-86–Ala-106 traverse the membrane as a helical segment. Residues Ile-107–Tyr-129 are Extracellular-facing. Residues Leu-130–Ala-150 traverse the membrane as a helical segment. Topologically, residues Lys-151–Ile-286 are cytoplasmic. Over residues Asp-212–Pro-227 the composition is skewed to polar residues. The tract at residues Asp-212–His-231 is disordered. The chain crosses the membrane as a helical span at residues Glu-287 to Val-306. At Leu-307–Ala-318 the chain is on the extracellular side. A helical transmembrane segment spans residues Val-319–Ala-336. At Thr-337–Leu-769 the chain is on the cytoplasmic side. Asp-374 serves as the catalytic 4-aspartylphosphate intermediate. A phosphoserine mark is found at Ser-439, Ser-450, Ser-496, and Ser-559. The residue at position 570 (Thr-570) is a Phosphothreonine. Residues Ser-587 and Ser-672 each carry the phosphoserine modification. Asp-714 and Asp-718 together coordinate Mg(2+). The helical transmembrane segment at Lys-770–Leu-789 threads the bilayer. Topologically, residues Phe-790–Leu-799 are extracellular. A helical membrane pass occupies residues Gly-800–Ala-820. At Tyr-821 to Lys-840 the chain is on the cytoplasmic side. Residue Ser-826 is modified to Phosphoserine. Residues Leu-841 to Phe-863 traverse the membrane as a helical segment. Residues Phe-864–Cys-915 lie on the Extracellular side of the membrane. Residues His-916–Lys-935 form a helical membrane-spanning segment. Topologically, residues Thr-936–Asn-948 are cytoplasmic. Ser-940 carries the post-translational modification Phosphoserine; by PKA. The helical transmembrane segment at Lys-949–Tyr-967 threads the bilayer. The Extracellular segment spans residues Cys-968–Val-982. A helical transmembrane segment spans residues Thr-983 to Lys-1003. Topologically, residues Leu-1004–Tyr-1020 are cytoplasmic.

Belongs to the cation transport ATPase (P-type) (TC 3.A.3) family. Type IIC subfamily. In terms of assembly, the sodium/potassium-transporting ATPase is composed of a catalytic alpha subunit, an auxiliary non-catalytic beta subunit and an additional regulatory subunit. Interacts with regulatory subunit FXYD1.

The protein localises to the membrane. It is found in the cell membrane. It catalyses the reaction K(+)(out) + Na(+)(in) + ATP + H2O = K(+)(in) + Na(+)(out) + ADP + phosphate + H(+). This is the catalytic component of the active enzyme, which catalyzes the hydrolysis of ATP coupled with the exchange of sodium and potassium ions across the plasma membrane. This action creates the electrochemical gradient of sodium and potassium, providing the energy for active transport of various nutrients. In Bos taurus (Bovine), this protein is Sodium/potassium-transporting ATPase subunit alpha-2 (ATP1A2).